The sequence spans 1374 residues: Mitogen-activated protein kinase kinase kinase 5 (1374 aa).

The tract at residues 68–87 (PAATSSSSATRGRGSSVGGG) is disordered. The span at 69 to 81 (AATSSSSATRGRG) shows a compositional bias: low complexity. Residues arginine 78 and arginine 80 each carry the asymmetric dimethylarginine; by PRMT1 modification. Serine 83 bears the Phosphoserine; by PIM1 and PKB/AKT1 mark. The segment at 649–1374 (MVNTITEEKG…AIIDFRNKQT (726 aa)) is interaction with PPIA/CYPA. Positions 680-938 (NGDRVVLGKG…ANDLLVDEFL (259 aa)) constitute a Protein kinase domain. Residues 686–694 (LGKGTYGIV) and lysine 709 each bind ATP. Tyrosine 718 is modified (phosphotyrosine). Aspartate 803 functions as the Proton acceptor in the catalytic mechanism. Residue threonine 813 is modified to Phosphothreonine; by autocatalysis. The residue at position 838 (threonine 838) is a Phosphothreonine; by autocatalysis, MELK and MAP3K6. At threonine 842 the chain carries Phosphothreonine; by autocatalysis. At serine 958 the chain carries Phosphoserine. Serine 966 is subject to Phosphoserine; by autocatalysis. Serine 1029 and serine 1033 each carry phosphoserine. Positions 1182–1209 (SESDTADQEDLDVEDDHEEQPSNQTVRR) are disordered. The span at 1185 to 1199 (DTADQEDLDVEDDHE) shows a compositional bias: acidic residues. A coiled-coil region spans residues 1245–1285 (LGRMKIETNRLLEELVRKEKELQALLHRAIEEKDQEIKHLK).

It belongs to the protein kinase superfamily. STE Ser/Thr protein kinase family. MAP kinase kinase kinase subfamily. Homodimer when inactive. Binds both upstream activators and downstream substrates in multimolecular complexes. Part of a cytoplasmic complex made of HIPK1, DAB2IP and MAP3K5 in response to TNF. This complex formation promotes MAP3K5-JNK activation and subsequent apoptosis. Interacts with SOCS1 which recognizes phosphorylation of Tyr-718 and induces MAP3K5/ASK1 degradation in endothelial cells. Interacts with the 14-3-3 family proteins such as YWHAB, YWHAE, YWHAQ, YWHAH, YWHAZ and SFN. Interacts with ARRB2, BIRC2, DAB2IP, IGF1R, MAP3K6/ASK2, PGAM5, PIM1, PPP5C, SOCS1, STUB1, TRAF2, TRAF6 and TXN. Interacts with ERN1 in a TRAF2-dependent manner. Interacts with calcineurin subunit PPP3R1. Interacts with PPM1L. Interacts (via N-terminus) with RAF1 and this interaction inhibits the proapoptotic function of MAP3K5. Interacts with DAB2IP (via N-terminus C2 domain); the interaction occurs in a TNF-alpha-dependent manner. Interacts with DUSP13A; may positively regulate apoptosis. Interacts with DAXX. Interacts with RC3H2. Interacts with PPIA/CYPA. Interacts with PRMT1; the interaction results in MAP3K5 methylation by PRMT1 which inhibits MAP3K5 activation. Interacts with TRAF2; the interaction is inhibited by PRMT1. Interacts with TRIM48. As to quaternary structure, (Microbial infection) Interacts with HIV-1 Nef; this interaction inhibits MAP3K5 signaling. Requires Mg(2+) as cofactor. Post-translationally, phosphorylated at Thr-838 through autophosphorylation and by MAP3K6/ASK2 which leads to activation. Thr-838 is dephosphorylated by PPP5C. Ser-83 and Ser-1033 are inactivating phosphorylation sites, the former of which is phosphorylated by AKT1. Phosphorylated at Ser-966 which induces association of MAP3K5/ASK1 with the 14-3-3 family proteins and suppresses MAP3K5/ASK1 activity. Calcineurin (CN) dephosphorylates this site. Also dephosphorylated and activated by PGAM5. Phosphorylation at Ser-966 in response to oxidative stress is negatively regulated by PPIA/CYPA. In terms of processing, ubiquitinated. Tumor necrosis factor (TNF) induces TNFR2-dependent ubiquitination, leading to proteasomal degradation. Ubiquitinated by RC3H2 in a TRIM48-dependent manner. Methylation at Arg-78 and Arg-80 by PRMT1 promotes association of MAP3K5 with thioredoxin and negatively regulates MAP3K5 association with TRAF2, inhibiting MAP3K5 activation. Methylation is blocked by ubiquitination of PRMT1 by TRIM48. As to expression, abundantly expressed in heart and pancreas.

It is found in the cytoplasm. Its subcellular location is the endoplasmic reticulum. It carries out the reaction L-seryl-[protein] + ATP = O-phospho-L-seryl-[protein] + ADP + H(+). It catalyses the reaction L-threonyl-[protein] + ATP = O-phospho-L-threonyl-[protein] + ADP + H(+). With respect to regulation, activated by various stressors, including oxidative stress, endoplasmic reticulum stress, and calcium overload, as well as by receptor-mediated inflammatory signals, such as the tumor necrosis factor (TNF) and lipopolysaccharide (LPS). Homophilic association of MAP3K5/ASK1 through the C-terminal coiled-coil domains and the heteromeric complex formation of MAP3K5/ASK1 with the reduced form of thioredoxin (TXN), constitutes an inactive form of the kinase. Upon ROS-induced dissociation of TXN from MAP3K5/ASK1, TRAF2 and TRAF6 are reciprocally recruited to MAP3K5/ASK1 and form the active MAP3K5/ASK1 signalosome, in which TRAF2 and TRAF6 appear to facilitate the active configuration of MAP3K5/ASK1. MAP3K5/ASK1 activity is also regulated through several phosphorylation and dephosphorylation events. Thr-838 is an activating phosphorylation site that is autophosphorylated and phosphorylated by MAP3K6/ASK2 and dephosphorylated by PPP5C. Ser-83 and Ser-1033 are inactivating phosphorylation sites, the former of which is phosphorylated by AKT1. Phosphorylation of Ser-966 induces association of MAP3K5/ASK1 with the 14-3-3 family proteins, which suppresses MAP3K5/ASK1 activity. Calcium/calmodulin-activated protein phosphatase calcineurin (PPP3CA) has been shown to directly dephosphorylate this site. SOCS1 binds to ASK1 by recognizing phosphorylation of Tyr-718 and induces MAP3K5/ASK1 degradation in endothelial cells. Also dephosphorylated and activated by PGAM5. Contains an N-terminal autoinhibitory domain. Once activated targeted for proteasomal degradation by RC3H2-mediated ubiquitination. Its function is as follows. Serine/threonine kinase which acts as an essential component of the MAP kinase signal transduction pathway. Plays an important role in the cascades of cellular responses evoked by changes in the environment. Mediates signaling for determination of cell fate such as differentiation and survival. Plays a crucial role in the apoptosis signal transduction pathway through mitochondria-dependent caspase activation. MAP3K5/ASK1 is required for the innate immune response, which is essential for host defense against a wide range of pathogens. Mediates signal transduction of various stressors like oxidative stress as well as by receptor-mediated inflammatory signals, such as the tumor necrosis factor (TNF) or lipopolysaccharide (LPS). Once activated, acts as an upstream activator of the MKK/JNK signal transduction cascade and the p38 MAPK signal transduction cascade through the phosphorylation and activation of several MAP kinase kinases like MAP2K4/SEK1, MAP2K3/MKK3, MAP2K6/MKK6 and MAP2K7/MKK7. These MAP2Ks in turn activate p38 MAPKs and c-jun N-terminal kinases (JNKs). Both p38 MAPK and JNKs control the transcription factors activator protein-1 (AP-1). The polypeptide is Mitogen-activated protein kinase kinase kinase 5 (MAP3K5) (Homo sapiens (Human)).